The sequence spans 394 residues: tRNA-specific 2-thiouridylase MnmA (394 aa).

Residues glycine 13–serine 20 and methionine 39 contribute to the ATP site. Residues asparagine 99–aspartate 101 are interaction with target base in tRNA. Cysteine 104 serves as the catalytic Nucleophile. Cysteine 104 and cysteine 202 are joined by a disulfide. An ATP-binding site is contributed by glycine 128. The interval lysine 152–glutamine 154 is interaction with tRNA. Cysteine 202 acts as the Cysteine persulfide intermediate in catalysis. The segment at arginine 329–tyrosine 330 is interaction with tRNA.

Belongs to the MnmA/TRMU family.

It localises to the cytoplasm. The catalysed reaction is S-sulfanyl-L-cysteinyl-[protein] + uridine(34) in tRNA + AH2 + ATP = 2-thiouridine(34) in tRNA + L-cysteinyl-[protein] + A + AMP + diphosphate + H(+). In terms of biological role, catalyzes the 2-thiolation of uridine at the wobble position (U34) of tRNA, leading to the formation of s(2)U34. In Polaromonas naphthalenivorans (strain CJ2), this protein is tRNA-specific 2-thiouridylase MnmA.